Here is a 157-residue protein sequence, read N- to C-terminus: Protein Smg homolog (157 aa).

The protein belongs to the Smg family.

The chain is Protein Smg homolog from Shewanella pealeana (strain ATCC 700345 / ANG-SQ1).